The sequence spans 407 residues: Probable cysteine protease atg4 (407 aa).

The active-site Nucleophile is the C136. Active-site residues include D310 and H312.

This sequence belongs to the peptidase C54 family.

It is found in the cytoplasm. The protein localises to the nucleus. The protein resides in the preautophagosomal structure. The catalysed reaction is [protein]-C-terminal L-amino acid-glycyl-phosphatidylethanolamide + H2O = [protein]-C-terminal L-amino acid-glycine + a 1,2-diacyl-sn-glycero-3-phosphoethanolamine. In terms of biological role, cysteine protease that is required for autophagy. Plays a key role in cytoplasm to vacuole transport (Cvt) and autophagy by mediating both proteolytic activation and delipidation of atg8. The protease activity is required for proteolytic activation of atg8 by the cleavage of the C-terminal amino acid of atg8 to reveal a C-terminal glycine. Azg8 ubiquitin-like activity requires the exposure of the glycine at the C-terminus for its conjugation to phosphatidylethanolamine (PE) and its insertion to membranes, which is necessary for autophagy. The atg8-PE conjugate mediates tethering between adjacent membranes and stimulates membrane hemifusion, leading to expansion of the autophagosomal membrane during autophagy. In addition to the protease activity, also catalyzes deconjugation of PE-conjugated forms of atg8 during macroautophagy since atg8 delipidation is required to release the protein from membranes, which facilitates multiple events during macroautophagy, and especially for efficient autophagosome biogenesis, the assembly of atg99-containing tubulovesicular clusters into phagophores/autophagosomes, and for the disassembly of PAS-associated ATG components. Atg8 delipidation by atg4 also recycles atg8-PE generated on inappropriate membranes to maintain a reservoir of unlipidated atg8 that is required for autophagosome formation at the PAS. The sequence is that of Probable cysteine protease atg4 from Aspergillus oryzae (strain ATCC 42149 / RIB 40) (Yellow koji mold).